The chain runs to 472 residues: WD repeat-containing protein 88 (472 aa).

The interval 1–22 (MASPPRCSPTAHDRECKLPPPS) is disordered. 7 WD repeats span residues 100 to 139 (GHEH…VVRD), 143 to 182 (RPKA…LLWK), 184 to 224 (RYDT…TVSV), 228 to 267 (HHTR…TLLT), 271 to 310 (AHSN…FRNC), 319 to 358 (GHEG…RKLS), and 361 to 400 (GHND…EIPL). The interval 447–472 (LPADTSSSSSSSERENSPPPRGSKDD) is disordered. Over residues 458–472 (SERENSPPPRGSKDD) the composition is skewed to basic and acidic residues.

This is WD repeat-containing protein 88 (WDR88) from Homo sapiens (Human).